The chain runs to 318 residues: Replication factor C small subunit (318 aa).

An ATP-binding site is contributed by 43–50 (GSVGTGKT).

The protein belongs to the activator 1 small subunits family. RfcS subfamily. As to quaternary structure, heteromultimer composed of small subunits (RfcS) and large subunits (RfcL).

Functionally, part of the RFC clamp loader complex which loads the PCNA sliding clamp onto DNA. The chain is Replication factor C small subunit from Thermoplasma volcanium (strain ATCC 51530 / DSM 4299 / JCM 9571 / NBRC 15438 / GSS1).